The following is a 282-amino-acid chain: Bis(5'-nucleosyl)-tetraphosphatase, symmetrical (282 aa).

It belongs to the Ap4A hydrolase family.

The enzyme catalyses P(1),P(4)-bis(5'-adenosyl) tetraphosphate + H2O = 2 ADP + 2 H(+). Hydrolyzes diadenosine 5',5'''-P1,P4-tetraphosphate to yield ADP. The protein is Bis(5'-nucleosyl)-tetraphosphatase, symmetrical of Burkholderia pseudomallei (strain 1106a).